Reading from the N-terminus, the 192-residue chain is uncharacterized protein (192 aa).

Disordered regions lie at residues 1–37 and 146–192; these read MASSCPGTPSPAGLPPPSVATPGETLGPAAPPEPAFP and ARGP…EQNK. Pro residues-rich tracts occupy residues 8–19 and 159–180; these read TPSPAGLPPPSV and APPPPSRSPRPALPATAPPGWP.

This is an uncharacterized protein from Homo sapiens (Human).